Consider the following 247-residue polypeptide: ATP synthase subunit a, chloroplastic (247 aa).

The next 5 membrane-spanning stretches (helical) occupy residues 38–58 (QVLI…IIAV), 95–115 (VPFI…GALL), 133–153 (DINT…YAGL), 199–219 (LVVV…VMFL), and 220–240 (GLFT…AYIG).

This sequence belongs to the ATPase A chain family. In terms of assembly, F-type ATPases have 2 components, CF(1) - the catalytic core - and CF(0) - the membrane proton channel. CF(1) has five subunits: alpha(3), beta(3), gamma(1), delta(1), epsilon(1). CF(0) has four main subunits: a, b, b' and c.

The protein localises to the plastid. It is found in the chloroplast thylakoid membrane. Functionally, key component of the proton channel; it plays a direct role in the translocation of protons across the membrane. This is ATP synthase subunit a, chloroplastic from Phalaenopsis aphrodite subsp. formosana (Moth orchid).